The primary structure comprises 138 residues: ATP synthase epsilon chain (138 aa).

The protein belongs to the ATPase epsilon chain family. F-type ATPases have 2 components, CF(1) - the catalytic core - and CF(0) - the membrane proton channel. CF(1) has five subunits: alpha(3), beta(3), gamma(1), delta(1), epsilon(1). CF(0) has three main subunits: a, b and c.

It localises to the cell membrane. Its function is as follows. Produces ATP from ADP in the presence of a proton gradient across the membrane. The sequence is that of ATP synthase epsilon chain from Streptococcus pyogenes serotype M3 (strain ATCC BAA-595 / MGAS315).